The following is a 393-amino-acid chain: Phosphoglycerate kinase (393 aa).

Substrate is bound by residues 21–23, R36, 59–62, R114, and R147; these read DIN and HFGR. ATP contacts are provided by residues K197, E319, and 349–352; that span reads GGDT.

It belongs to the phosphoglycerate kinase family. In terms of assembly, monomer.

The protein localises to the cytoplasm. It carries out the reaction (2R)-3-phosphoglycerate + ATP = (2R)-3-phospho-glyceroyl phosphate + ADP. The protein operates within carbohydrate degradation; glycolysis; pyruvate from D-glyceraldehyde 3-phosphate: step 2/5. In Dinoroseobacter shibae (strain DSM 16493 / NCIMB 14021 / DFL 12), this protein is Phosphoglycerate kinase.